The sequence spans 283 residues: Bifunctional protein FolD (283 aa).

NADP(+) is bound by residues 165–167 (GRS), Ser190, and Val231.

The protein belongs to the tetrahydrofolate dehydrogenase/cyclohydrolase family. In terms of assembly, homodimer.

It catalyses the reaction (6R)-5,10-methylene-5,6,7,8-tetrahydrofolate + NADP(+) = (6R)-5,10-methenyltetrahydrofolate + NADPH. The catalysed reaction is (6R)-5,10-methenyltetrahydrofolate + H2O = (6R)-10-formyltetrahydrofolate + H(+). It participates in one-carbon metabolism; tetrahydrofolate interconversion. In terms of biological role, catalyzes the oxidation of 5,10-methylenetetrahydrofolate to 5,10-methenyltetrahydrofolate and then the hydrolysis of 5,10-methenyltetrahydrofolate to 10-formyltetrahydrofolate. The sequence is that of Bifunctional protein FolD from Anoxybacillus flavithermus (strain DSM 21510 / WK1).